We begin with the raw amino-acid sequence, 242 residues long: MSKRRIAPLTFLRRLLLRILAALAVFWGGGIALFSVVPVPFSAVMAERQISAWLGGEFGYVAHSDWVSMADISPWMGLAVIAAEDQKFPEHWGFDVPAIEKALAHNERNESRIRGASTLSQQTAKNLFLWDGRSWLRKGLEAGLTLGIETVWSKKRILTVYLNIAEFGDGIFGVEAAAQRYFHKPASRLNMSEAALLAAVLPNPLRYKANAPSGYVRSRQAWIMRQMRQLGGESFMTRNQLN.

Residues 19–39 (ILAALAVFWGGGIALFSVVPV) traverse the membrane as a helical segment.

Belongs to the glycosyltransferase 51 family.

It localises to the cell inner membrane. It catalyses the reaction [GlcNAc-(1-&gt;4)-Mur2Ac(oyl-L-Ala-gamma-D-Glu-L-Lys-D-Ala-D-Ala)](n)-di-trans,octa-cis-undecaprenyl diphosphate + beta-D-GlcNAc-(1-&gt;4)-Mur2Ac(oyl-L-Ala-gamma-D-Glu-L-Lys-D-Ala-D-Ala)-di-trans,octa-cis-undecaprenyl diphosphate = [GlcNAc-(1-&gt;4)-Mur2Ac(oyl-L-Ala-gamma-D-Glu-L-Lys-D-Ala-D-Ala)](n+1)-di-trans,octa-cis-undecaprenyl diphosphate + di-trans,octa-cis-undecaprenyl diphosphate + H(+). Its pathway is cell wall biogenesis; peptidoglycan biosynthesis. In terms of biological role, peptidoglycan polymerase that catalyzes glycan chain elongation from lipid-linked precursors. The protein is Biosynthetic peptidoglycan transglycosylase of Salmonella agona (strain SL483).